A 414-amino-acid chain; its full sequence is TAR DNA-binding protein 43 (414 aa).

Residues Lys-79, Lys-84, Lys-95, Lys-102, and Lys-181 each participate in a glycyl lysine isopeptide (Lys-Gly) (interchain with G-Cter in SUMO2) cross-link. RRM domains follow at residues 104 to 200 and 191 to 262; these read SDLI…RCTE and RKVF…NAEP. Phosphoserine is present on Ser-183. The tract at residues 216-414 is interaction with UBQLN2; that stretch reads DVMDVFIPKP…MDSKSSGWGM (199 aa). The segment covering 261–274 has biased composition (basic and acidic residues); that stretch reads EPKHNSNRQLERSG. Disordered stretches follow at residues 261–303 and 341–373; these read EPKH…GNNQ and ASQQNQSGPSGNNQNQGNMQREPNQAFGSGNNS. Lys-263 is covalently cross-linked (Glycyl lysine isopeptide (Lys-Gly) (interchain with G-Cter in SUMO2)). Residues 275–303 are compositionally biased toward gly residues; that stretch reads RFGGNPGGFGNQGGFGNSRGGGAGLGNNQ. Ser-292 carries the post-translational modification Phosphoserine. Residue Arg-293 is modified to Omega-N-methylarginine. Residues 342–358 are compositionally biased toward low complexity; it reads SQQNQSGPSGNNQNQGN.

Monomer and component of the SFPQ-NONO complex, which is probably a heterotetramer of two 52 kDa (NONO) and two 100 kDa (SFPQ) subunits. NONO is a component of spliceosome and U5.4/6 snRNP complexes. Interacts with CPNE4 (via VWFA domain). Forms heterodimers with PSPC1; this involves formation of a coiled coil domain by helices from both proteins. Part of complex consisting of SFPQ, NONO and MATR3. Part of a complex consisting of SFPQ, NONO and NR5A1. Part of a complex consisting of SFPQ, NONO and TOP1. Interacts with SPI1. Interacts with RNF43. Interacts with PER1 and PER2. Part of the HDP-RNP complex composed of at least HEXIM1, PRKDC, XRCC5, XRCC6, paraspeckle proteins (SFPQ, NONO, PSPC1, RBM14, and MATR3) and NEAT1 RNA. Interacts (via second RRM domain) with WASL; the interaction is direct. Component of a multiprotein complex with WASL and SFPQ. Interacts with ERCC6. Interacts (via DNA-binding domain) with TET1. In terms of processing, hyperphosphorylated. Ubiquitinated.

The protein resides in the nucleus. It is found in the nucleolus. It localises to the nucleus speckle. Its subcellular location is the chromosome. The protein localises to the mitochondrion. Its function is as follows. DNA- and RNA binding protein, involved in several nuclear processes. Binds the conventional octamer sequence in double-stranded DNA. Also binds single-stranded DNA and RNA at a site independent of the duplex site. Involved in pre-mRNA splicing, probably as a heterodimer with SFPQ. Interacts with U5 snRNA, probably by binding to a purine-rich sequence located on the 3' side of U5 snRNA stem 1b. Together with PSPC1, required for the formation of nuclear paraspeckles. The SFPQ-NONO heteromer associated with MATR3 may play a role in nuclear retention of defective RNAs. The SFPQ-NONO heteromer may be involved in DNA unwinding by modulating the function of topoisomerase I/TOP1. The SFPQ-NONO heteromer may be involved in DNA non-homologous end joining (NHEJ) required for double-strand break repair and V(D)J recombination and may stabilize paired DNA ends. In vitro, the complex strongly stimulates DNA end joining, binds directly to the DNA substrates and cooperates with the Ku70/G22P1-Ku80/XRCC5 (Ku) dimer to establish a functional preligation complex. NONO is involved in transcriptional regulation. The SFPQ-NONO-NR5A1 complex binds to the CYP17 promoter and regulates basal and cAMP-dependent transcriptional activity. NONO binds to an enhancer element in long terminal repeats of endogenous intracisternal A particles (IAPs) and activates transcription. Regulates the circadian clock by repressing the transcriptional activator activity of the CLOCK-BMAL1 heterodimer. Important for the functional organization of GABAergic synapses. Plays a specific and important role in the regulation of synaptic RNAs and GPHN/gephyrin scaffold structure, through the regulation of GABRA2 transcript. Plays a key role during neuronal differentiation by recruiting TET1 to genomic loci and thereby regulating 5-hydroxymethylcytosine levels. Plays a role in the regulation of DNA virus-mediated innate immune response by assembling into the HDP-RNP complex, a complex that serves as a platform for IRF3 phosphorylation and subsequent innate immune response activation through the cGAS-STING pathway. The polypeptide is TAR DNA-binding protein 43 (TARDBP) (Pongo abelii (Sumatran orangutan)).